Consider the following 176-residue polypeptide: ATP-dependent protease subunit HslV (176 aa).

Threonine 2 is an active-site residue. Positions 157, 160, and 163 each coordinate Na(+).

This sequence belongs to the peptidase T1B family. HslV subfamily. A double ring-shaped homohexamer of HslV is capped on each side by a ring-shaped HslU homohexamer. The assembly of the HslU/HslV complex is dependent on binding of ATP.

It is found in the cytoplasm. The enzyme catalyses ATP-dependent cleavage of peptide bonds with broad specificity.. Its activity is regulated as follows. Allosterically activated by HslU binding. In terms of biological role, protease subunit of a proteasome-like degradation complex believed to be a general protein degrading machinery. The sequence is that of ATP-dependent protease subunit HslV from Pseudomonas fluorescens (strain ATCC BAA-477 / NRRL B-23932 / Pf-5).